A 231-amino-acid polypeptide reads, in one-letter code: U1 small nuclear ribonucleoprotein C-1 (231 aa).

A Matrin-type zinc finger spans residues 4–36 (YYCDYCDTYLTHDSPSVRKQHNAGYKHKANVRT). Composition is skewed to pro residues over residues 117–127 (APGIPGYPGGP), 134–159 (GAPP…PPGS), and 167–178 (LPRPPTLPPPTS). The interval 117 to 231 (APGIPGYPGG…SYAQPSEGNH (115 aa)) is disordered. The span at 181–193 (PGAPIPNSAAPPA) shows a compositional bias: low complexity. Residues 199–217 (PPAPAGPTSGAPPAPPTAP) are compositionally biased toward pro residues.

This sequence belongs to the U1 small nuclear ribonucleoprotein C family. In terms of assembly, U1 snRNP is composed of the 7 core Sm proteins B/B', D1, D2, D3, E, F and G that assemble in a heptameric protein ring on the Sm site of the small nuclear RNA to form the core snRNP, and at least 3 U1 snRNP-specific proteins U1-70K, U1-A and U1-C. U1-C interacts with U1 snRNA and the 5' splice-site region of the pre-mRNA.

Its subcellular location is the nucleus. Functionally, component of the spliceosomal U1 snRNP, which is essential for recognition of the pre-mRNA 5' splice-site and the subsequent assembly of the spliceosome. U1-C is directly involved in initial 5' splice-site recognition for both constitutive and regulated alternative splicing. The interaction with the 5' splice-site seems to precede base-pairing between the pre-mRNA and the U1 snRNA. Stimulates commitment or early (E) complex formation by stabilizing the base pairing of the 5' end of the U1 snRNA and the 5' splice-site region. The protein is U1 small nuclear ribonucleoprotein C-1 of Sorghum bicolor (Sorghum).